We begin with the raw amino-acid sequence, 420 residues long: F-box protein At5g07610 (420 aa).

The segment at M1–S25 is disordered. The segment covering T7–R19 has biased composition (basic residues). The F-box domain maps to S27–N77.

This Arabidopsis thaliana (Mouse-ear cress) protein is F-box protein At5g07610.